Reading from the N-terminus, the 163-residue chain is Peptide deformylase 3 (163 aa).

Fe cation-binding residues include Cys-91 and His-133. Glu-134 is an active-site residue. His-137 is a binding site for Fe cation.

This sequence belongs to the polypeptide deformylase family. Fe(2+) is required as a cofactor.

It catalyses the reaction N-terminal N-formyl-L-methionyl-[peptide] + H2O = N-terminal L-methionyl-[peptide] + formate. In terms of biological role, removes the formyl group from the N-terminal Met of newly synthesized proteins. Requires at least a dipeptide for an efficient rate of reaction. N-terminal L-methionine is a prerequisite for activity but the enzyme has broad specificity at other positions. This chain is Peptide deformylase 3, found in Shewanella oneidensis (strain ATCC 700550 / JCM 31522 / CIP 106686 / LMG 19005 / NCIMB 14063 / MR-1).